The following is a 235-amino-acid chain: Eukaryotic translation initiation factor 4E-1 (235 aa).

Positions 1–16 (MAVEDTPKSVVTEEAK) are enriched in basic and acidic residues. The tract at residues 1-59 (MAVEDTPKSVVTEEAKPNSIENPIDRYHEEGDDAEEGEIAGGEGDGNVDESSKSGVPES) is disordered. EIF4G-binding regions lie at residues 60 to 63 (HPLE) and 70 to 106 (FDNP…NNMK). Residues 78–83 (KQTSWG), K110, and 128–129 (WE) contribute to the mRNA site. C133 and C171 are oxidised to a cystine. The tract at residues 154 to 163 (YTLLALIGEQ) is EIF4G-binding. Residues 178 to 183 (RGKQER) and 223 to 227 (KKLDR) contribute to the mRNA site.

This sequence belongs to the eukaryotic initiation factor 4E family. In terms of assembly, EIF4F is a multi-subunit complex, the composition of which varies with external and internal environmental conditions. It is composed of at least EIF4A, EIF4E and EIF4G. EIF4E is also known to interact with other partners. In higher plants two isoforms of EIF4F have been identified, named isoform EIF4F and isoform EIF(iso)4F. Isoform EIF4F has subunits p220 and p26, whereas isoform EIF(iso)4F has subunits p82 and p28. Interacts directly with EXA1. As to quaternary structure, (Microbial infection) Interacts with viral genome-linked protein (VPg); this interaction is possible in susceptible hosts but impaired in resistant plants. Post-translationally, according to the redox status, the Cys-133-Cys-171 disulfide bridge may have a role in regulating protein function by affecting its ability to bind capped mRNA. In terms of tissue distribution, expressed in all tissues except in the cells of the specialization zone of the roots.

The protein resides in the nucleus. It is found in the cytoplasm. Its function is as follows. Component of the protein complex eIF4F, which is involved in the recognition of the mRNA cap, ATP-dependent unwinding of 5'-terminal secondary structure and recruitment of mRNA to the ribosome. Recognizes and binds the 7-methylguanosine-containing mRNA cap during an early step in the initiation of protein synthesis and facilitates ribosome binding by inducing the unwinding of the mRNAs secondary structures. Key component of recessive resistance to potyviruses. In terms of biological role, (Microbial infection) Susceptibility host factor required for viral infection by recruiting viral RNAs to the host ribosomal complex via an interaction with viral genome-linked protein (VPg). The polypeptide is Eukaryotic translation initiation factor 4E-1 (Arabidopsis thaliana (Mouse-ear cress)).